We begin with the raw amino-acid sequence, 795 residues long: Phenylalanine--tRNA ligase beta subunit (795 aa).

The tRNA-binding domain maps to 39-148 (AGSFHGVVVG…ADAPIGTDIR (110 aa)). The B5 domain maps to 401 to 476 (PKRATITLRR…RVYGYNNIPD (76 aa)). Mg(2+)-binding residues include Asp454, Asp460, Glu463, and Glu464. Residues 701–794 (SRFPANRRDI…LKERFQASLR (94 aa)) enclose the FDX-ACB domain.

This sequence belongs to the phenylalanyl-tRNA synthetase beta subunit family. Type 1 subfamily. In terms of assembly, tetramer of two alpha and two beta subunits. Mg(2+) is required as a cofactor.

The protein resides in the cytoplasm. The catalysed reaction is tRNA(Phe) + L-phenylalanine + ATP = L-phenylalanyl-tRNA(Phe) + AMP + diphosphate + H(+). This Escherichia coli (strain K12) protein is Phenylalanine--tRNA ligase beta subunit (pheT).